A 203-amino-acid polypeptide reads, in one-letter code: Outer-membrane lipoprotein carrier protein (203 aa).

A signal peptide spans 1 to 20; the sequence is MRRGRVWLAALCLAAGAAHA.

The protein belongs to the LolA family. Monomer.

It is found in the periplasm. Its function is as follows. Participates in the translocation of lipoproteins from the inner membrane to the outer membrane. Only forms a complex with a lipoprotein if the residue after the N-terminal Cys is not an aspartate (The Asp acts as a targeting signal to indicate that the lipoprotein should stay in the inner membrane). The polypeptide is Outer-membrane lipoprotein carrier protein (Methylibium petroleiphilum (strain ATCC BAA-1232 / LMG 22953 / PM1)).